Reading from the N-terminus, the 130-residue chain is MAYLRTGAEFIASYRSSLNRMSDLQQKIKMFGFNNAYYNQVGLLKHDWLPHSPVWLEALRRLPRELQEARDFRIARASLLYASKHVLPKEQWTTIEDDIPYLEPYVNVVVKEMSDRSNWDNFVNPEIYSE.

Belongs to the UQCRB/QCR7 family. In terms of assembly, component of the ubiquinol-cytochrome c oxidoreductase (cytochrome b-c1 complex, complex III, CIII), a multisubunit enzyme composed of 3 respiratory subunits cytochrome b, cytochrome c1 and Rieske protein, 2 core protein subunits, and additional low-molecular weight protein subunits. The complex exists as an obligatory dimer and forms supercomplexes (SCs) in the inner mitochondrial membrane with cytochrome c oxidase (complex IV, CIV).

The protein localises to the mitochondrion inner membrane. Functionally, component of the ubiquinol-cytochrome c oxidoreductase, a multisubunit transmembrane complex that is part of the mitochondrial electron transport chain which drives oxidative phosphorylation. The respiratory chain contains 3 multisubunit complexes succinate dehydrogenase (complex II, CII), ubiquinol-cytochrome c oxidoreductase (cytochrome b-c1 complex, complex III, CIII) and cytochrome c oxidase (complex IV, CIV), that cooperate to transfer electrons derived from NADH and succinate to molecular oxygen, creating an electrochemical gradient over the inner membrane that drives transmembrane transport and the ATP synthase. The cytochrome b-c1 complex catalyzes electron transfer from ubiquinol to cytochrome c, linking this redox reaction to translocation of protons across the mitochondrial inner membrane, with protons being carried across the membrane as hydrogens on the quinol. In the process called Q cycle, 2 protons are consumed from the matrix, 4 protons are released into the intermembrane space and 2 electrons are passed to cytochrome c. This is Cytochrome b-c1 complex subunit 7 from Schistosoma mansoni (Blood fluke).